The following is a 425-amino-acid chain: Glutamyl-tRNA reductase (425 aa).

Substrate contacts are provided by residues 49–52, Ser-107, 112–114, and Gln-118; these read TCNR and EPQ. The active-site Nucleophile is Cys-50. 187 to 192 contributes to the NADP(+) binding site; that stretch reads GAGETI.

Belongs to the glutamyl-tRNA reductase family. As to quaternary structure, homodimer.

The catalysed reaction is (S)-4-amino-5-oxopentanoate + tRNA(Glu) + NADP(+) = L-glutamyl-tRNA(Glu) + NADPH + H(+). The protein operates within porphyrin-containing compound metabolism; protoporphyrin-IX biosynthesis; 5-aminolevulinate from L-glutamyl-tRNA(Glu): step 1/2. Catalyzes the NADPH-dependent reduction of glutamyl-tRNA(Glu) to glutamate 1-semialdehyde (GSA). The polypeptide is Glutamyl-tRNA reductase (Pseudomonas putida (strain W619)).